Consider the following 463-residue polypeptide: Retinoic acid receptor RXR-gamma (463 aa).

The modulating stretch occupies residues 1–138 (MYGNYSHFMK…TSPGSLVKHI (138 aa)). Positions 17 to 53 (GSPGHSGSTSMSPSAALSTGKPMDSHPSYTDTPVSAP) are disordered. Over residues 21–33 (HSGSTSMSPSAAL) the composition is skewed to polar residues. 2 NR C4-type zinc fingers span residues 139-159 (CAIC…CEGC) and 175-199 (CRDN…YQKC). Positions 139–204 (CAICGDRSSG…RYQKCLVMGM (66 aa)) form a DNA-binding region, nuclear receptor. A hinge region spans residues 205–230 (KREAVQEERQRSRERAESEAECASSG). Residues 211–222 (EERQRSRERAES) show a composition bias toward basic and acidic residues. Residues 211-232 (EERQRSRERAESEAECASSGHE) form a disordered region. One can recognise an NR LBD domain in the interval 231 to 459 (HEDMPVERIL…TFLMEMLETP (229 aa)).

This sequence belongs to the nuclear hormone receptor family. NR2 subfamily. Homodimer. Heterodimer with a RAR molecule. Binds DNA preferentially as a RAR/RXR heterodimer. Interacts with RARA. Acetylated by EP300.

The protein localises to the nucleus. It is found in the cytoplasm. Receptor for retinoic acid. Retinoic acid receptors bind as heterodimers to their target response elements in response to their ligands, all-trans or 9-cis retinoic acid, and regulate gene expression in various biological processes. The RAR/RXR heterodimers bind to the retinoic acid response elements (RARE) composed of tandem 5'-AGGTCA-3' sites known as DR1-DR5. The high affinity ligand for RXRs is 9-cis retinoic acid. This chain is Retinoic acid receptor RXR-gamma (RXRG), found in Sus scrofa (Pig).